A 294-amino-acid polypeptide reads, in one-letter code: Cell division protein ZipA (294 aa).

Position 1 (methionine 1) is a topological domain, periplasmic. Residues 2 to 22 traverse the membrane as a helical segment; that stretch reads EIGLREWLILIGIIVIAGILF. Residues 23 to 294 are Cytoplasmic-facing; the sequence is DGWRRMRGGK…FERRALTQKR (272 aa). Disordered stretches follow at residues 64–111 and 126–146; these read THKE…GDLN and KDDF…STPV. A compositionally biased stretch (basic and acidic residues) spans 82 to 91; it reads ARERERDPKP.

The protein belongs to the ZipA family. Interacts with FtsZ via their C-terminal domains.

Its subcellular location is the cell inner membrane. Essential cell division protein that stabilizes the FtsZ protofilaments by cross-linking them and that serves as a cytoplasmic membrane anchor for the Z ring. Also required for the recruitment to the septal ring of downstream cell division proteins. The protein is Cell division protein ZipA of Pseudomonas entomophila (strain L48).